The following is a 208-amino-acid chain: 3-demethoxyubiquinol 3-hydroxylase (208 aa).

Fe cation contacts are provided by glutamate 57, glutamate 87, histidine 90, glutamate 139, glutamate 171, and histidine 174.

This sequence belongs to the COQ7 family. The cofactor is Fe cation.

Its subcellular location is the cell membrane. The catalysed reaction is a 5-methoxy-2-methyl-3-(all-trans-polyprenyl)benzene-1,4-diol + AH2 + O2 = a 3-demethylubiquinol + A + H2O. The protein operates within cofactor biosynthesis; ubiquinone biosynthesis. Catalyzes the hydroxylation of 2-nonaprenyl-3-methyl-6-methoxy-1,4-benzoquinol during ubiquinone biosynthesis. This chain is 3-demethoxyubiquinol 3-hydroxylase, found in Nitrosomonas europaea (strain ATCC 19718 / CIP 103999 / KCTC 2705 / NBRC 14298).